The chain runs to 278 residues: Checkpoint protein HUS1B (278 aa).

Belongs to the HUS1 family. As to quaternary structure, interacts with RAD1 and RAD9B. As to expression, expressed strongly in testis, less in spleen, thymus, prostate, colon and leukocytes.

This Homo sapiens (Human) protein is Checkpoint protein HUS1B (HUS1B).